Here is a 31-residue protein sequence, read N- to C-terminus: Aspartate racemase (31 aa).

Residues 1 to 31 (PVAPEYLFKKEEDKGANKEEEEVAPELGIRA) form a disordered region. The segment covering 7-18 (LFKKEEDKGANK) has biased composition (basic and acidic residues).

Belongs to the aspartate/glutamate racemases family. Requires pyridoxal 5'-phosphate as cofactor.

It carries out the reaction L-aspartate = D-aspartate. Inhibited by hydroxylamine, aminooxyacetate, phenylhydrazine and sodium borohydride. Its function is as follows. Highly specific toward aspartate and entirely inactive on glutamate, alanine and serine. This Anadara broughtonii (Blood clam) protein is Aspartate racemase.